Consider the following 284-residue polypeptide: Bifunctional protein FolD 1 (284 aa).

Residues 166–168 and isoleucine 232 contribute to the NADP(+) site; that span reads GAS.

Belongs to the tetrahydrofolate dehydrogenase/cyclohydrolase family. In terms of assembly, homodimer.

The catalysed reaction is (6R)-5,10-methylene-5,6,7,8-tetrahydrofolate + NADP(+) = (6R)-5,10-methenyltetrahydrofolate + NADPH. The enzyme catalyses (6R)-5,10-methenyltetrahydrofolate + H2O = (6R)-10-formyltetrahydrofolate + H(+). It participates in one-carbon metabolism; tetrahydrofolate interconversion. In terms of biological role, catalyzes the oxidation of 5,10-methylenetetrahydrofolate to 5,10-methenyltetrahydrofolate and then the hydrolysis of 5,10-methenyltetrahydrofolate to 10-formyltetrahydrofolate. The sequence is that of Bifunctional protein FolD 1 from Pseudomonas savastanoi pv. phaseolicola (strain 1448A / Race 6) (Pseudomonas syringae pv. phaseolicola (strain 1448A / Race 6)).